A 303-amino-acid chain; its full sequence is Recombination-associated protein RdgC (303 aa).

This sequence belongs to the RdgC family.

The protein resides in the cytoplasm. It is found in the nucleoid. Its function is as follows. May be involved in recombination. In Serratia proteamaculans (strain 568), this protein is Recombination-associated protein RdgC.